The chain runs to 207 residues: Small ribosomal subunit protein eS1 (207 aa).

This sequence belongs to the eukaryotic ribosomal protein eS1 family.

This is Small ribosomal subunit protein eS1 from Methanosarcina barkeri (strain Fusaro / DSM 804).